The primary structure comprises 359 residues: Elongation factor Ts 1, mitochondrial (359 aa).

Low complexity predominate over residues 323–341; that stretch reads GKAAPAPKAEEPAAVAPAK. The segment at 323–345 is disordered; sequence GKAAPAPKAEEPAAVAPAKADAE.

It belongs to the EF-Ts family.

Its subcellular location is the mitochondrion. In terms of biological role, associates with the EF-Tu.GDP complex and induces the exchange of GDP to GTP. It remains bound to the aminoacyl-tRNA.EF-Tu.GTP complex up to the GTP hydrolysis stage on the ribosome. This chain is Elongation factor Ts 1, mitochondrial, found in Thalassiosira pseudonana (Marine diatom).